A 551-amino-acid chain; its full sequence is Putative transport protein HI_0035 (551 aa).

Helical transmembrane passes span 4-24 (IAIT…IGHW), 28-48 (GVGL…HFTN), 65-85 (FGLI…FFSS), 95-115 (AFAI…HKIA), and 157-177 (VSYA…MWLI). 2 RCK C-terminal domains span residues 191–275 (RFNA…IIGH) and 277–360 (VDAP…VIGN). Helical transmembrane passes span 370-390 (MLPV…PFYI), 402-424 (AGGP…LYWF), 438-458 (IVLF…DTLV), 463-483 (LEWM…VGTI), 492-512 (YLTI…LAFA), and 529-549 (VYPL…VLLW).

It belongs to the AAE transporter (TC 2.A.81) family. YidE subfamily.

The protein localises to the cell membrane. The polypeptide is Putative transport protein HI_0035 (Haemophilus influenzae (strain ATCC 51907 / DSM 11121 / KW20 / Rd)).